We begin with the raw amino-acid sequence, 203 residues long: MPKAPKGKSAGREKKVIHPYSRKAAQITREAHKQEKKEKLKNEKALRLNLVGEKLQWFQNHLDPQKKRYSKKDACELIERYLNRFSSELEQIELHNSIRDRQGRRHCSRETVIKQTMERERQQFEGYGLEIPDILNASNLKTFREWDFDLKKLPNIKMRKICANDAIPKTCKRKTIITVDQDLGELELNDESSDSDEEMTAVA.

Positions 1–39 are disordered; sequence MPKAPKGKSAGREKKVIHPYSRKAAQITREAHKQEKKEK. An ADP-ribosylserine modification is found at Ser9. A compositionally biased stretch (basic and acidic residues) spans 29 to 39; that stretch reads REAHKQEKKEK.

This sequence belongs to the TMA16 family. Associates with pre-60S ribosomal particles.

It is found in the nucleus. Functionally, involved in the biogenesis of the 60S ribosomal subunit in the nucleus. This Homo sapiens (Human) protein is Translation machinery-associated protein 16 (TMA16).